We begin with the raw amino-acid sequence, 404 residues long: Probable tRNA sulfurtransferase (404 aa).

The THUMP domain maps to 61-166; sequence EAVSERLKDV…SGYSYIMCDE (106 aa). Residues 184 to 185, 209 to 210, R266, G288, and Q297 contribute to the ATP site; these read LL and HF.

It belongs to the ThiI family.

The protein resides in the cytoplasm. It carries out the reaction [ThiI sulfur-carrier protein]-S-sulfanyl-L-cysteine + a uridine in tRNA + 2 reduced [2Fe-2S]-[ferredoxin] + ATP + H(+) = [ThiI sulfur-carrier protein]-L-cysteine + a 4-thiouridine in tRNA + 2 oxidized [2Fe-2S]-[ferredoxin] + AMP + diphosphate. The catalysed reaction is [ThiS sulfur-carrier protein]-C-terminal Gly-Gly-AMP + S-sulfanyl-L-cysteinyl-[cysteine desulfurase] + AH2 = [ThiS sulfur-carrier protein]-C-terminal-Gly-aminoethanethioate + L-cysteinyl-[cysteine desulfurase] + A + AMP + 2 H(+). Its pathway is cofactor biosynthesis; thiamine diphosphate biosynthesis. In terms of biological role, catalyzes the ATP-dependent transfer of a sulfur to tRNA to produce 4-thiouridine in position 8 of tRNAs, which functions as a near-UV photosensor. Also catalyzes the transfer of sulfur to the sulfur carrier protein ThiS, forming ThiS-thiocarboxylate. This is a step in the synthesis of thiazole, in the thiamine biosynthesis pathway. The sulfur is donated as persulfide by IscS. In Bacillus cereus (strain B4264), this protein is Probable tRNA sulfurtransferase.